Reading from the N-terminus, the 166-residue chain is UPF0336 protein ML2425 (166 aa).

A MaoC-like domain is found at 10 to 131; sequence LIGKHYRQLD…VIAEVRSEVT (122 aa).

The protein belongs to the UPF0336 family.

This is UPF0336 protein ML2425 from Mycobacterium leprae (strain TN).